The following is a 185-amino-acid chain: Neuronal vesicle trafficking-associated protein 1 (185 aa).

The Cytoplasmic segment spans residues 1–82; that stretch reads MVKLGNNFAE…ITEGVTERFK (82 aa). The chain crosses the membrane as a helical; Signal-anchor for type II membrane protein span at residues 83 to 103; it reads VSVLVLFALAFLTCVVFLVVY. At 104-185 the chain is on the lumenal side; it reads KVYKYDRACP…QETEAAEKSA (82 aa). A required for GRIP1 interaction region spans residues 129–164; that stretch reads ESYYTEQDSSAREKFYTVINHYNLAKQSITRSVSPW.

Belongs to the NSG family. Forms a complex with GRIP1, GRIA2 and STX12; controls the intracellular fate of AMPAR and the endosomal sorting of the GRIA2 subunit toward recycling and membrane targeting. Interacts with GRIP1. Interacts with STX12. Interacts with APP; could regulate APP processing. Interacts with FAM171A1. Widely expressed in brain and spinal cord. Expressed in neurons during maturation and synapse formation.

Its subcellular location is the membrane. The protein resides in the golgi apparatus. It localises to the trans-Golgi network membrane. The protein localises to the endosome membrane. It is found in the cell projection. Its subcellular location is the dendrite. The protein resides in the early endosome membrane. It localises to the late endosome membrane. The protein localises to the lysosome lumen. It is found in the recycling endosome membrane. Its subcellular location is the cytoplasmic vesicle membrane. The protein resides in the golgi stack membrane. It localises to the endosome. The protein localises to the multivesicular body membrane. It is found in the endoplasmic reticulum membrane. In terms of biological role, plays a role in the recycling mechanism in neurons of multiple receptors, including AMPAR, APP and L1CAM and acts at the level of early endosomes to promote sorting of receptors toward a recycling pathway. Regulates sorting and recycling of GRIA2 through interaction with GRIP1 and then contributes to the regulation of synaptic transmission and plasticity by affecting the recycling and targeting of AMPA receptors to the synapse. Is required for faithful sorting of L1CAM to axons by facilitating trafficking from somatodendritic early endosome or the recycling endosome. In an other hand, induces apoptosis via the activation of CASP3 in response to DNA damage. In Rattus norvegicus (Rat), this protein is Neuronal vesicle trafficking-associated protein 1.